The chain runs to 134 residues: Probable glycine cleavage system H protein (134 aa).

Positions 29–110 (TVLVGITDYA…PYGAWIAKIK (82 aa)) constitute a Lipoyl-binding domain. Residue K70 is modified to N6-lipoyllysine.

Belongs to the GcvH family. In terms of assembly, the glycine cleavage system is composed of four proteins: P, T, L and H. (R)-lipoate is required as a cofactor.

Functionally, the glycine cleavage system catalyzes the degradation of glycine. The H protein shuttles the methylamine group of glycine from the P protein to the T protein. The chain is Probable glycine cleavage system H protein from Pyrococcus abyssi (strain GE5 / Orsay).